Consider the following 121-residue polypeptide: Urotensin-2 (121 aa).

Positions 1 to 19 are cleaved as a signal peptide; the sequence is MSKLVPCLLLLGCLGLLFA. Positions 20-106 are excised as a propeptide; it reads LPVPDSRKEP…HLLARIKKPY (87 aa). C115 and C120 are disulfide-bonded.

It belongs to the urotensin-2 family.

Its subcellular location is the secreted. Highly potent vasoconstrictor. This Sus scrofa (Pig) protein is Urotensin-2 (UTS2).